A 276-amino-acid polypeptide reads, in one-letter code: Protein MGF 360-15R (276 aa).

It belongs to the asfivirus MGF 360 family.

In terms of biological role, plays a role in virus cell tropism, and may be required for efficient virus replication in macrophages. In African swine fever virus (isolate Tick/South Africa/Pretoriuskop Pr4/1996) (ASFV), this protein is Protein MGF 360-15R.